A 321-amino-acid polypeptide reads, in one-letter code: Polygalacturonan/rhamnogalacturonan transport system permease protein YteP (321 aa).

The ABC transmembrane type-1 domain occupies 1 to 144; that stretch reads MKTAEAQAPA…YIPHFMSWVI (144 aa). 3 consecutive transmembrane segments (helical) span residues 21–41, 63–83, and 123–143; these read RKRL…ILPG, YQPF…FIRL, and IALF…MSWV.

This sequence belongs to the binding-protein-dependent transport system permease family. In terms of assembly, the complex is probably composed of two ATP-binding proteins (MsmX), two transmembrane proteins (YtcP and YteP) and a solute-binding protein (YtcQ).

The protein localises to the cell membrane. Its function is as follows. Involved in pectin degradation. Part of the ABC transporter complex YtcQP-YteP involved in the uptake of polygalacturonan and rhamnogalacturonan type I. Responsible for the translocation of the substrate across the membrane. This chain is Polygalacturonan/rhamnogalacturonan transport system permease protein YteP (yteP), found in Bacillus subtilis (strain 168).